Reading from the N-terminus, the 369-residue chain is MWIKNISLKHYRNYEEAQVDFSPNLNIFIGRNAQGKTNFLEAIYFLALTRSHRTRSDKELVHFKHHDVQITGEVIRKSGHLSLDIQLSEKGRITKVNHLKQAKLSDYIGAMTVVLFAPEDLQLVKGAPSLRRKFLDIDIGQIKPTYLAELSNYNHVLKQRNTYLKTTNNVDKTFLSVLDEQLADYGSRVIEHRFDFIQALNDEADKHHYIISTELEHLSIHYKSSIEFTDKSSIREHFLNQLSKSHSRDIFKKNTSIGPHRDDITFFINDINATFGSQGQQRSLILSLKLAEIELIKTVTNDYPILLLDDVMSELDNHRQLKLLEGIKENVQTFITTTSLEHLSALPDQLKIFNVSDGTISINEKKATD.

30–37 is an ATP binding site; it reads GRNAQGKT.

Belongs to the RecF family.

It is found in the cytoplasm. Its function is as follows. The RecF protein is involved in DNA metabolism; it is required for DNA replication and normal SOS inducibility. RecF binds preferentially to single-stranded, linear DNA. It also seems to bind ATP. The sequence is that of DNA replication and repair protein RecF from Streptococcus agalactiae serotype Ia (strain ATCC 27591 / A909 / CDC SS700).